The chain runs to 764 residues: 5-methyltetrahydropteroyltriglutamate--homocysteine methyltransferase (764 aa).

Residues 16 to 19 (RELK) and Lys115 each bind 5-methyltetrahydropteroyltri-L-glutamate. Residues 435–437 (IGS) and Glu488 contribute to the L-homocysteine site. Residues 435-437 (IGS) and Glu488 contribute to the L-methionine site. 5-methyltetrahydropteroyltri-L-glutamate-binding positions include 519–520 (RC) and Trp565. Asp603 lines the L-homocysteine pocket. An L-methionine-binding site is contributed by Asp603. Residue Glu609 participates in 5-methyltetrahydropteroyltri-L-glutamate binding. Zn(2+) is bound by residues His645, Cys647, and Glu669. Residue His698 is the Proton donor of the active site. Cys730 provides a ligand contact to Zn(2+).

Belongs to the vitamin-B12 independent methionine synthase family. Zn(2+) is required as a cofactor.

The enzyme catalyses 5-methyltetrahydropteroyltri-L-glutamate + L-homocysteine = tetrahydropteroyltri-L-glutamate + L-methionine. It functions in the pathway amino-acid biosynthesis; L-methionine biosynthesis via de novo pathway; L-methionine from L-homocysteine (MetE route): step 1/1. Catalyzes the transfer of a methyl group from 5-methyltetrahydrofolate to homocysteine resulting in methionine formation. The polypeptide is 5-methyltetrahydropteroyltriglutamate--homocysteine methyltransferase (Burkholderia thailandensis (strain ATCC 700388 / DSM 13276 / CCUG 48851 / CIP 106301 / E264)).